Consider the following 136-residue polypeptide: Glutamate mutase sigma subunit (136 aa).

In terms of domain architecture, B12-binding spans 3 to 136; the sequence is KKKIVIGVIG…IIDLKKDFKI (134 aa). Residues 13–17, H16, and 61–63 contribute to the adenosylcob(III)alamin site; these read SDCHT and SSI.

Belongs to the methylaspartate mutase GlmS subunit family. In terms of assembly, heterotetramer composed of 2 epsilon subunits (GlmE) and 2 sigma subunits (GlmS). GlmE exists as a homodimer and GlmS as a monomer. Adenosylcob(III)alamin serves as cofactor.

It carries out the reaction (2S,3S)-3-methyl-L-aspartate = L-glutamate. Its pathway is amino-acid degradation; L-glutamate degradation via mesaconate pathway; acetate and pyruvate from L-glutamate: step 1/4. Functionally, catalyzes the carbon skeleton rearrangement of L-glutamate to L-threo-3-methylaspartate ((2S,3S)-3-methylaspartate). The chain is Glutamate mutase sigma subunit from Fusobacterium nucleatum subsp. nucleatum (strain ATCC 25586 / DSM 15643 / BCRC 10681 / CIP 101130 / JCM 8532 / KCTC 2640 / LMG 13131 / VPI 4355).